The following is a 60-amino-acid chain: UPF0291 protein CTC_01690.1 (60 aa).

The protein belongs to the UPF0291 family.

The protein localises to the cytoplasm. This chain is UPF0291 protein CTC_01690.1, found in Clostridium tetani (strain Massachusetts / E88).